Here is a 191-residue protein sequence, read N- to C-terminus: MLAIGITGSYASGKTFILDYLAEKGYKTFCADRCIKELYQDLSVQTQILKLLPELESFNIGKISNLIYNNDLAREKLQNFIYPLLIDKLILFKKENANSKFGFAEIPLLYEAKFDKYFDFVVTIYCSEEIRMQRAITRTSFDIEIYNKIKEIQLSQESKIAKADFAINSGVDMLDLEKQIEKLILVIARKL.

The DPCK domain maps to 3–191 (AIGITGSYAS…KLILVIARKL (189 aa)). 11–16 (ASGKTF) is a binding site for ATP.

The protein belongs to the CoaE family.

It localises to the cytoplasm. The enzyme catalyses 3'-dephospho-CoA + ATP = ADP + CoA + H(+). Its pathway is cofactor biosynthesis; coenzyme A biosynthesis; CoA from (R)-pantothenate: step 5/5. In terms of biological role, catalyzes the phosphorylation of the 3'-hydroxyl group of dephosphocoenzyme A to form coenzyme A. The chain is Dephospho-CoA kinase from Rickettsia felis (strain ATCC VR-1525 / URRWXCal2) (Rickettsia azadi).